A 270-amino-acid polypeptide reads, in one-letter code: Surfeit locus protein 4 homolog (270 aa).

6 helical membrane-spanning segments follow: residues 65 to 85, 93 to 113, 115 to 135, 178 to 198, 206 to 226, and 243 to 263; these read FLATVFVLVNLLGQLGGCGMV, IAVGLLFFIVVLQTVAYSILW, FQFLLRNFALIGALLLVLAEA, LSVWQVIQDIIGSILMVLVVL, ALILVALLTILNLYHNAWWTI, and TLSVIGGLLMIVSLGPGGVSM. Residues 267–270 carry the Di-lysine motif motif; that stretch reads KKKW.

Belongs to the SURF4 family.

It is found in the endoplasmic reticulum membrane. Endoplasmic reticulum cargo receptor that mediates the export of lipoproteins by recruiting cargos into COPII vesicles to facilitate their secretion. This Drosophila melanogaster (Fruit fly) protein is Surfeit locus protein 4 homolog.